We begin with the raw amino-acid sequence, 266 residues long: Gas vesicle protein L (266 aa).

The protein belongs to the gas vesicle GvpF/GvpL family.

The protein localises to the gas vesicle. Might be involved in nucleating gas vesicle formation. A minor component of the gas vesicle. Gas vesicles are hollow, gas filled proteinaceous nanostructures found in some microorganisms. It is not clear what function gas vesicles perform in soil bacteria. This is Gas vesicle protein L from Streptomyces sp. (strain CB03234).